A 462-amino-acid chain; its full sequence is Argininosuccinate lyase (462 aa).

Belongs to the lyase 1 family. Argininosuccinate lyase subfamily.

The protein localises to the cytoplasm. It catalyses the reaction 2-(N(omega)-L-arginino)succinate = fumarate + L-arginine. It participates in amino-acid biosynthesis; L-arginine biosynthesis; L-arginine from L-ornithine and carbamoyl phosphate: step 3/3. This Bacillus cereus (strain ATCC 14579 / DSM 31 / CCUG 7414 / JCM 2152 / NBRC 15305 / NCIMB 9373 / NCTC 2599 / NRRL B-3711) protein is Argininosuccinate lyase.